The chain runs to 508 residues: Histidine ammonia-lyase (508 aa).

A cross-link (5-imidazolinone (Ala-Gly)) is located at residues 145 to 147 (ASG). Position 146 is a 2,3-didehydroalanine (Ser) (S146).

It belongs to the PAL/histidase family. In terms of processing, contains an active site 4-methylidene-imidazol-5-one (MIO), which is formed autocatalytically by cyclization and dehydration of residues Ala-Ser-Gly.

The protein localises to the cytoplasm. The catalysed reaction is L-histidine = trans-urocanate + NH4(+). It functions in the pathway amino-acid degradation; L-histidine degradation into L-glutamate; N-formimidoyl-L-glutamate from L-histidine: step 1/3. This is Histidine ammonia-lyase from Myxococcus xanthus (strain DK1622).